Reading from the N-terminus, the 294-residue chain is Probable 2-(5''-triphosphoribosyl)-3'-dephosphocoenzyme-A synthase (294 aa).

This sequence belongs to the CitG/MdcB family.

It catalyses the reaction 3'-dephospho-CoA + ATP = 2'-(5''-triphospho-alpha-D-ribosyl)-3'-dephospho-CoA + adenine. This Streptococcus pyogenes serotype M28 (strain MGAS6180) protein is Probable 2-(5''-triphosphoribosyl)-3'-dephosphocoenzyme-A synthase.